The following is a 329-amino-acid chain: 31 kDa immunogenic protein (329 aa).

An N-terminal signal peptide occupies residues 1–28 (MKFGSKIRRLAVAAVAGAIALGASFAVA).

The polypeptide is 31 kDa immunogenic protein (bcsP31) (Brucella abortus biovar 1 (strain 9-941)).